The following is a 283-amino-acid chain: ATP synthase gamma chain (283 aa).

It belongs to the ATPase gamma chain family. As to quaternary structure, F-type ATPases have 2 components, CF(1) - the catalytic core - and CF(0) - the membrane proton channel. CF(1) has five subunits: alpha(3), beta(3), gamma(1), delta(1), epsilon(1). CF(0) has three main subunits: a, b and c.

It is found in the cell inner membrane. Functionally, produces ATP from ADP in the presence of a proton gradient across the membrane. The gamma chain is believed to be important in regulating ATPase activity and the flow of protons through the CF(0) complex. The polypeptide is ATP synthase gamma chain (Ehrlichia ruminantium (strain Gardel)).